The sequence spans 434 residues: Beta-enolase (434 aa).

Residue A2 is modified to N-acetylalanine. T72 bears the Phosphothreonine mark. Phosphoserine is present on residues S83 and S157. 2 residues coordinate substrate: H158 and E167. S176 is modified (phosphoserine). T205 is modified (phosphothreonine). E210 (proton donor) is an active-site residue. T229 carries the post-translational modification Phosphothreonine. Y236 bears the Phosphotyrosine mark. Residue D245 coordinates Mg(2+). S263 carries the post-translational modification Phosphoserine. Positions 293 and 318 each coordinate substrate. The Mg(2+) site is built by E293 and D318. The active-site Proton acceptor is K343. Residues 370–373 (SHRS) and K394 each bind substrate.

It belongs to the enolase family. As to quaternary structure, mammalian enolase is composed of 3 isozyme subunits, alpha, beta and gamma, which can form homodimers or heterodimers which are cell-type and development-specific. Interacts with PNKD. It depends on Mg(2+) as a cofactor.

The protein resides in the cytoplasm. The enzyme catalyses (2R)-2-phosphoglycerate = phosphoenolpyruvate + H2O. The protein operates within carbohydrate degradation; glycolysis; pyruvate from D-glyceraldehyde 3-phosphate: step 4/5. Its function is as follows. Glycolytic enzyme that catalyzes the conversion of 2-phosphoglycerate to phosphoenolpyruvate. Appears to have a function in striated muscle development and regeneration. The chain is Beta-enolase (ENO3) from Bos taurus (Bovine).